Here is a 158-residue protein sequence, read N- to C-terminus: Cyclic pyranopterin monophosphate synthase (158 aa).

Residues 75–77 (LCH) and 113–114 (ME) each bind substrate. Residue aspartate 128 is part of the active site.

The protein belongs to the MoaC family. As to quaternary structure, homohexamer; trimer of dimers.

It carries out the reaction (8S)-3',8-cyclo-7,8-dihydroguanosine 5'-triphosphate = cyclic pyranopterin phosphate + diphosphate. It functions in the pathway cofactor biosynthesis; molybdopterin biosynthesis. Catalyzes the conversion of (8S)-3',8-cyclo-7,8-dihydroguanosine 5'-triphosphate to cyclic pyranopterin monophosphate (cPMP). This Actinobacillus pleuropneumoniae serotype 5b (strain L20) protein is Cyclic pyranopterin monophosphate synthase.